A 689-amino-acid chain; its full sequence is Methionine--tRNA ligase (689 aa).

The 'HIGH' region motif lies at 15 to 25; the sequence is PYANGPVHIGH. Zn(2+)-binding residues include C147, C150, C160, and C163. A 'KMSKS' region motif is present at residues 342 to 346; that stretch reads KISTS. T345 lines the ATP pocket. Positions 588–689 constitute a tRNA-binding domain; sequence DFAKMDIRVA…AVVNAGSMIG (102 aa).

The protein belongs to the class-I aminoacyl-tRNA synthetase family. MetG type 1 subfamily. As to quaternary structure, homodimer. It depends on Zn(2+) as a cofactor.

It is found in the cytoplasm. It carries out the reaction tRNA(Met) + L-methionine + ATP = L-methionyl-tRNA(Met) + AMP + diphosphate. Its function is as follows. Is required not only for elongation of protein synthesis but also for the initiation of all mRNA translation through initiator tRNA(fMet) aminoacylation. The sequence is that of Methionine--tRNA ligase from Cytophaga hutchinsonii (strain ATCC 33406 / DSM 1761 / CIP 103989 / NBRC 15051 / NCIMB 9469 / D465).